A 291-amino-acid polypeptide reads, in one-letter code: NAD kinase (291 aa).

Residue Asp-72 is the Proton acceptor of the active site. NAD(+) is bound by residues 72 to 73 (DG), 146 to 147 (ND), Arg-157, Arg-174, Asp-176, 187 to 192 (TAYSLS), and Gln-247.

The protein belongs to the NAD kinase family. It depends on a divalent metal cation as a cofactor.

It localises to the cytoplasm. The enzyme catalyses NAD(+) + ATP = ADP + NADP(+) + H(+). Functionally, involved in the regulation of the intracellular balance of NAD and NADP, and is a key enzyme in the biosynthesis of NADP. Catalyzes specifically the phosphorylation on 2'-hydroxyl of the adenosine moiety of NAD to yield NADP. This Hydrogenovibrio crunogenus (strain DSM 25203 / XCL-2) (Thiomicrospira crunogena) protein is NAD kinase.